The chain runs to 169 residues: Succinate dehydrogenase cytochrome b560 subunit, mitochondrial (169 aa).

The N-terminal 29 residues, 1–29, are a transit peptide targeting the mitochondrion; the sequence is MAALLLRHVGRHCLRAHLSPQLCIRNAVP. Over 30–62 the chain is Mitochondrial matrix; sequence LGTTAKEEMERFWSKNTTLNRPLSPHISIYGWS. A helical transmembrane segment spans residues 63-92; sequence LPMAMSICHRGTGIALSAGVSLFGLSALLV. Topologically, residues 93-112 are mitochondrial intermembrane; that stretch reads PGSFESHLEFVKSLCLGPAL. Residues 113 to 137 traverse the membrane as a helical segment; that stretch reads IHTAKFALVFPLMYHTWNGIRHLMW. Residue H127 participates in heme b binding. Residues 138–144 are Mitochondrial matrix-facing; that stretch reads DLGKGLT. Residues 145 to 166 traverse the membrane as a helical segment; that stretch reads ISQLHQSGVAVLVLTVLSSVGL. Residues 167–169 lie on the Mitochondrial intermembrane side of the membrane; the sequence is AAM.

Belongs to the cytochrome b560 family. In terms of assembly, component of complex II composed of four subunits: the flavoprotein (FP) SDHA, iron-sulfur protein (IP) SDHB, and a cytochrome b560 composed of SDHC and SDHD. Requires heme b as cofactor. In terms of processing, the N-terminus is blocked.

The protein localises to the mitochondrion inner membrane. It participates in carbohydrate metabolism; tricarboxylic acid cycle. In terms of biological role, membrane-anchoring subunit of succinate dehydrogenase (SDH) that is involved in complex II of the mitochondrial electron transport chain and is responsible for transferring electrons from succinate to ubiquinone (coenzyme Q). SDH also oxidizes malate to the non-canonical enol form of oxaloacetate, enol-oxaloacetate. Enol-oxaloacetate, which is a potent inhibitor of the succinate dehydrogenase activity, is further isomerized into keto-oxaloacetate. This chain is Succinate dehydrogenase cytochrome b560 subunit, mitochondrial (SDHC), found in Bos taurus (Bovine).